The chain runs to 288 residues: Signal recognition particle receptor FtsY (288 aa).

Residues 93–100 (GINGTGKT), 175–179 (DTAGR), and 233–236 (TKLD) each bind GTP.

It belongs to the GTP-binding SRP family. FtsY subfamily. In terms of assembly, part of the signal recognition particle protein translocation system, which is composed of SRP and FtsY.

It localises to the cell membrane. The protein resides in the cytoplasm. It catalyses the reaction GTP + H2O = GDP + phosphate + H(+). Involved in targeting and insertion of nascent membrane proteins into the cytoplasmic membrane. Acts as a receptor for the complex formed by the signal recognition particle (SRP) and the ribosome-nascent chain (RNC). The protein is Signal recognition particle receptor FtsY of Thermoplasma acidophilum (strain ATCC 25905 / DSM 1728 / JCM 9062 / NBRC 15155 / AMRC-C165).